The primary structure comprises 356 residues: NADH-quinone oxidoreductase subunit H (356 aa).

8 consecutive transmembrane segments (helical) span residues 18 to 38 (IVMVAQSVLLLVVLLIAIAYI), 87 to 107 (GVFLLAPLVTCVLALAAWAVI), 120 to 140 (VGILYIFAISSLSIYGIIMAG), 166 to 186 (IGFVFITVLLCAGSLNLSAIV), 202 to 222 (WLTFLNWYWLPLLPMFVVFYV), 265 to 285 (AITTMCAMGAILFMGGWLPPI), 292 to 312 (WVPGVIWFSLKLFFMFFLFAM), and 328 to 348 (LGWKVFLPLSLAMVVIVAGVL).

This sequence belongs to the complex I subunit 1 family. NDH-1 is composed of 14 different subunits. Subunits NuoA, H, J, K, L, M, N constitute the membrane sector of the complex.

The protein resides in the cell inner membrane. It carries out the reaction a quinone + NADH + 5 H(+)(in) = a quinol + NAD(+) + 4 H(+)(out). Its function is as follows. NDH-1 shuttles electrons from NADH, via FMN and iron-sulfur (Fe-S) centers, to quinones in the respiratory chain. The immediate electron acceptor for the enzyme in this species is believed to be ubiquinone. Couples the redox reaction to proton translocation (for every two electrons transferred, four hydrogen ions are translocated across the cytoplasmic membrane), and thus conserves the redox energy in a proton gradient. This subunit may bind ubiquinone. The polypeptide is NADH-quinone oxidoreductase subunit H (Nitrobacter hamburgensis (strain DSM 10229 / NCIMB 13809 / X14)).